Here is a 739-residue protein sequence, read N- to C-terminus: Phosphoribosylformylglycinamidine synthase subunit PurL (739 aa).

Residue His-53 is part of the active site. ATP is bound by residues Tyr-56 and Lys-95. Glu-97 is a Mg(2+) binding site. Substrate-binding positions include 98–101 and Arg-120; that span reads SHNH. His-99 serves as the catalytic Proton acceptor. Asp-121 is a Mg(2+) binding site. Gln-244 is a substrate binding site. Asp-274 serves as a coordination point for Mg(2+). A substrate-binding site is contributed by 318 to 320; that stretch reads ESQ. ATP-binding residues include Asp-501 and Gly-538. Asn-539 provides a ligand contact to Mg(2+). Ser-541 contributes to the substrate binding site.

This sequence belongs to the FGAMS family. In terms of assembly, monomer. Part of the FGAM synthase complex composed of 1 PurL, 1 PurQ and 2 PurS subunits.

The protein resides in the cytoplasm. It catalyses the reaction N(2)-formyl-N(1)-(5-phospho-beta-D-ribosyl)glycinamide + L-glutamine + ATP + H2O = 2-formamido-N(1)-(5-O-phospho-beta-D-ribosyl)acetamidine + L-glutamate + ADP + phosphate + H(+). It participates in purine metabolism; IMP biosynthesis via de novo pathway; 5-amino-1-(5-phospho-D-ribosyl)imidazole from N(2)-formyl-N(1)-(5-phospho-D-ribosyl)glycinamide: step 1/2. Functionally, part of the phosphoribosylformylglycinamidine synthase complex involved in the purines biosynthetic pathway. Catalyzes the ATP-dependent conversion of formylglycinamide ribonucleotide (FGAR) and glutamine to yield formylglycinamidine ribonucleotide (FGAM) and glutamate. The FGAM synthase complex is composed of three subunits. PurQ produces an ammonia molecule by converting glutamine to glutamate. PurL transfers the ammonia molecule to FGAR to form FGAM in an ATP-dependent manner. PurS interacts with PurQ and PurL and is thought to assist in the transfer of the ammonia molecule from PurQ to PurL. The chain is Phosphoribosylformylglycinamidine synthase subunit PurL from Listeria monocytogenes serovar 1/2a (strain ATCC BAA-679 / EGD-e).